A 391-amino-acid polypeptide reads, in one-letter code: MEKVGVLLMNLGGPERITDVGPFLYNLFSDPEIIRLPVPAFQKPLAWLISTLRSTTSQQAYLSIGGGSPIRRITEQQARELQSKLRDKGLNVTTYIAMRYWHPFTESAIADMKADGVDQIVVLPLYPHFSISTSGSSFRELKKLRDSDSEFQKIPMRCVRSWFSQSGYLKSMVELISEQISLCESPDSAHIFFTAHGVPKSYVEEAGDPYKEQIEDCSLLIIDELEKYLGHTNPYTLSYQSRVGPVEWLKPYTEEVLTDLGKAKVNDLIVVPISFVGEHIETLQEIDIEYKEIAEKAGIVNFRRVKALNTHPTFIDGLSELVVSCLEGPIINIEKASELPEKVKLYPQEKWQWGWNNSSEVWNGRVAMIVFLILFIELISGSGPLHKLGIL.

The Fe cation site is built by His196 and Glu281.

The protein belongs to the ferrochelatase family.

It is found in the cytoplasm. It carries out the reaction heme b + 2 H(+) = protoporphyrin IX + Fe(2+). It participates in porphyrin-containing compound metabolism; protoheme biosynthesis; protoheme from protoporphyrin-IX: step 1/1. In terms of biological role, catalyzes the ferrous insertion into protoporphyrin IX. The sequence is that of Ferrochelatase from Prochlorococcus marinus subsp. pastoris (strain CCMP1986 / NIES-2087 / MED4).